The following is a 262-amino-acid chain: Kallikrein-1 (262 aa).

A signal peptide spans 1-18 (MWFLVLCLALSLGGTGAA). Positions 19–24 (PPIQSR) are cleaved as a propeptide — activation peptide. The Peptidase S1 domain occupies 25–259 (IVGGWECEQH…YVKWIEDTIA (235 aa)). Cystine bridges form between cysteine 31/cysteine 174, cysteine 50/cysteine 66, cysteine 153/cysteine 220, cysteine 185/cysteine 199, and cysteine 210/cysteine 235. Histidine 65 functions as the Charge relay system in the catalytic mechanism. Serine 93 carries O-linked (GalNAc...) serine glycosylation. Asparagine 102 is a glycosylation site (N-linked (GlcNAc...) asparagine). Residue serine 104 is glycosylated (O-linked (GalNAc...) serine). N-linked (GlcNAc...) asparagine glycosylation is present at asparagine 108. Aspartate 120 (charge relay system) is an active-site residue. Residue asparagine 165 is glycosylated (N-linked (GlcNAc...) asparagine; partial). O-linked (GalNAc...) serine glycosylation is present at serine 167. Serine 214 acts as the Charge relay system in catalysis.

This sequence belongs to the peptidase S1 family. Kallikrein subfamily. Post-translationally, the O-linked polysaccharides on Ser-93, Ser-104 and Ser-167 are probably the mucin type linked to GalNAc. In PubMed:3163150, GalNAc was detected with the corresponding peptides but not located. In terms of tissue distribution, isoform 2 is expressed in pancreas, salivary glands, kidney, colon, prostate gland, testis, spleen and the colon adenocarcinoma cell line T84.

It carries out the reaction Preferential cleavage of Arg-|-Xaa bonds in small molecule substrates. Highly selective action to release kallidin (lysyl-bradykinin) from kininogen involves hydrolysis of Met-|-Xaa or Leu-|-Xaa.. In terms of biological role, glandular kallikreins cleave Met-Lys and Arg-Ser bonds in kininogen to release Lys-bradykinin. Its function is as follows. (Microbial infection) Cleaves Neisseria meningitidis NHBA in saliva; Neisseria is an obligate commensal of the nasopharyngeal mucosa. The sequence is that of Kallikrein-1 (KLK1) from Homo sapiens (Human).